The chain runs to 121 residues: NLVQFKTLIMKIAGRSVVYKYFYGCYCGWGGIGQPRDATDRCCFVHDCCYGKVTNCNPKTATYSYTEENGALVCGGDDPCKKQVCECDRVAAMCFRDNKDTYDNKYWFLPPKNCQEDSEPC.

7 cysteine pairs are disulfide-bonded: C25–C114, C27–C43, C42–C94, C48–C121, C49–C87, C56–C80, and C74–C85. Residues Y26, G28, and G30 each contribute to the Ca(2+) site. Residue H46 is part of the active site. D47 lines the Ca(2+) pocket. The active site involves D88.

It depends on Ca(2+) as a cofactor. Expressed by the venom gland.

Its subcellular location is the secreted. It catalyses the reaction a 1,2-diacyl-sn-glycero-3-phosphocholine + H2O = a 1-acyl-sn-glycero-3-phosphocholine + a fatty acid + H(+). Functionally, snake venom phospholipase A2 (PLA2) which exhibits indirect hemolysis, induces mild edema inflammation in the foot pads of mice and slightly delays anticoagulant activities. In mice, not lethal, even at the highest dose, and exhibits low to moderate myotoxicity on muscular fibers. PLA2 catalyzes the calcium-dependent hydrolysis of the 2-acyl groups in 3-sn-phosphoglycerides. This is Acidic phospholipase A2 SpII RP4 from Bothrops alternatus (Urutu).